We begin with the raw amino-acid sequence, 297 residues long: HTH-type transcriptional regulator ArgP (297 aa).

The 57-residue stretch at 4–60 folds into the HTH lysR-type domain; sequence PDYRTLQALDAVIRERGFERAAQKLCITQSAVSQRIKQLENLFGQPLLVRTIPPRPT. Residues 21–40 constitute a DNA-binding region (H-T-H motif); that stretch reads FERAAQKLCITQSAVSQRIK.

Belongs to the LysR transcriptional regulatory family. Homodimer.

Functionally, controls the transcription of genes involved in arginine and lysine metabolism. This Pectobacterium carotovorum subsp. carotovorum (strain PC1) protein is HTH-type transcriptional regulator ArgP.